A 433-amino-acid chain; its full sequence is Homogentisate 1,2-dioxygenase (433 aa).

The active-site Proton acceptor is the His288. Fe cation-binding residues include His331 and Glu337. 2 residues coordinate homogentisate: Tyr346 and His367. His367 contributes to the Fe cation binding site.

It belongs to the homogentisate dioxygenase family. As to quaternary structure, hexamer; dimer of trimers. Fe cation serves as cofactor.

The enzyme catalyses homogentisate + O2 = 4-maleylacetoacetate + H(+). The protein operates within amino-acid degradation; L-phenylalanine degradation; acetoacetate and fumarate from L-phenylalanine: step 4/6. Functionally, involved in the catabolism of homogentisate (2,5-dihydroxyphenylacetate or 2,5-OH-PhAc), a central intermediate in the degradation of phenylalanine and tyrosine. Catalyzes the oxidative ring cleavage of the aromatic ring of homogentisate to yield maleylacetoacetate. The protein is Homogentisate 1,2-dioxygenase of Pseudomonas putida (strain GB-1).